The primary structure comprises 349 residues: Hydroxymethylglutaryl-CoA synthase (349 aa).

(3S)-3-hydroxy-3-methylglutaryl-CoA-binding residues include Asp-29 and Ala-30. Glu-81 (proton donor/acceptor) is an active-site residue. Cys-113 and Thr-154 together coordinate (3S)-3-hydroxy-3-methylglutaryl-CoA. Cys-113 functions as the Acyl-thioester intermediate in the catalytic mechanism. Arg-202 is a binding site for CoA. Thr-204 and His-237 together coordinate (3S)-3-hydroxy-3-methylglutaryl-CoA. The active-site Proton donor/acceptor is the His-237. Lys-242 provides a ligand contact to CoA. 3 residues coordinate (3S)-3-hydroxy-3-methylglutaryl-CoA: Lys-246, Asn-269, and Ser-299.

Belongs to the thiolase-like superfamily. Archaeal HMG-CoA synthase family. In terms of assembly, interacts with acetoacetyl-CoA thiolase that catalyzes the precedent step in the pathway and with a DUF35 protein. The acetoacetyl-CoA thiolase/HMG-CoA synthase complex channels the intermediate via a fused CoA-binding site, which allows for efficient coupling of the endergonic thiolase reaction with the exergonic HMGCS reaction.

The enzyme catalyses acetoacetyl-CoA + acetyl-CoA + H2O = (3S)-3-hydroxy-3-methylglutaryl-CoA + CoA + H(+). The protein operates within metabolic intermediate biosynthesis; (R)-mevalonate biosynthesis; (R)-mevalonate from acetyl-CoA: step 2/3. Its function is as follows. Catalyzes the condensation of acetyl-CoA with acetoacetyl-CoA to form 3-hydroxy-3-methylglutaryl-CoA (HMG-CoA). Functions in the mevalonate (MVA) pathway leading to isopentenyl diphosphate (IPP), a key precursor for the biosynthesis of isoprenoid compounds that are building blocks of archaeal membrane lipids. The polypeptide is Hydroxymethylglutaryl-CoA synthase (Methanosarcina barkeri (strain Fusaro / DSM 804)).